The chain runs to 423 residues: Putative competence-damage inducible protein (423 aa).

The protein belongs to the CinA family.

This Streptococcus equi subsp. equi (strain 4047) protein is Putative competence-damage inducible protein.